Reading from the N-terminus, the 289-residue chain is Serine/threonine-protein phosphatase Pgam5, mitochondrial (289 aa).

The helical transmembrane segment at 7–23 (FVCGTGAGLAVYYLQRL) threads the bilayer.

Belongs to the phosphoglycerate mutase family. BPG-dependent PGAM subfamily. Interacts with Pk92B/ASK1.

Its subcellular location is the mitochondrion outer membrane. It catalyses the reaction O-phospho-L-seryl-[protein] + H2O = L-seryl-[protein] + phosphate. The enzyme catalyses O-phospho-L-threonyl-[protein] + H2O = L-threonyl-[protein] + phosphate. Functionally, displays phosphatase activity for serine/threonine residues, and dephosphorylates and activates Pk92B kinase. Has apparently no phosphoglycerate mutase activity. The chain is Serine/threonine-protein phosphatase Pgam5, mitochondrial from Drosophila erecta (Fruit fly).